Consider the following 715-residue polypeptide: Methionine--tRNA ligase (715 aa).

The short motif at 20–30 (PYANGKAHIGH) is the 'HIGH' region element. The Zn(2+) site is built by Cys151, Cys154, Cys163, and Cys167. A 'KMSKS' region motif is present at residues 334 to 338 (KFSKT). Lys337 contacts ATP. Residues 559 to 593 (ANAKRNGVKGGEKEPSKSEGMGPSEASKASEKTVD) are disordered. One can recognise a tRNA-binding domain in the interval 613–715 (DFAKLDIRVG…KEIKSGSRIR (103 aa)).

It belongs to the class-I aminoacyl-tRNA synthetase family. MetG type 1 subfamily. As to quaternary structure, homodimer. Zn(2+) is required as a cofactor.

It is found in the cytoplasm. The catalysed reaction is tRNA(Met) + L-methionine + ATP = L-methionyl-tRNA(Met) + AMP + diphosphate. Its function is as follows. Is required not only for elongation of protein synthesis but also for the initiation of all mRNA translation through initiator tRNA(fMet) aminoacylation. This chain is Methionine--tRNA ligase, found in Methanosarcina mazei (strain ATCC BAA-159 / DSM 3647 / Goe1 / Go1 / JCM 11833 / OCM 88) (Methanosarcina frisia).